The following is a 429-amino-acid chain: Uracil permease (429 aa).

Residues methionine 1–proline 13 lie on the Cytoplasmic side of the membrane. Residues leucine 14–valine 37 traverse the membrane as a helical segment. The Periplasmic segment spans residues leucine 38–isoleucine 41. The chain crosses the membrane as a helical span at residues asparagine 42–cysteine 61. Residues lysine 62–lysine 64 are Cytoplasmic-facing. A discontinuously helical transmembrane segment spans residues isoleucine 65–leucine 81. Position 73 (phenylalanine 73) interacts with uracil. Over leucine 82–valine 89 the chain is Periplasmic. Residues alanine 90–lysine 110 form a helical membrane-spanning segment. The Cytoplasmic segment spans residues alanine 111 to proline 122. A helical membrane pass occupies residues alanine 123–alanine 144. Topologically, residues glycine 145 to aspartate 155 are periplasmic. Residues serine 156–leucine 171 traverse the membrane as a helical segment. Over glycine 172 to glycine 178 the chain is Cytoplasmic. Residues phenylalanine 179–methionine 199 form a helical membrane-spanning segment. At glycine 200–glutamate 224 the chain is on the periplasmic side. The helical transmembrane segment at tryptophan 225–valine 248 threads the bilayer. Residue glutamate 241 coordinates uracil. Residues threonine 249–proline 261 are Cytoplasmic-facing. The chain crosses the membrane as a helical span at residues glycine 262–glycine 281. Residues serine 282–threonine 298 traverse the membrane as a discontinuously helical segment. 2 residues coordinate uracil: glycine 289 and glutamate 290. At arginine 299 to tyrosine 301 the chain is on the cytoplasmic side. Residues serine 302–valine 319 form a helical membrane-spanning segment. Over glycine 320–proline 332 the chain is Periplasmic. The chain crosses the membrane as a helical span at residues valine 333–isoleucine 354. Residues glutamate 355 to asparagine 365 are Cytoplasmic-facing. Residues leucine 366–glycine 401 constitute an intramembrane region (discontinuously helical). At leucine 402–lysine 429 the chain is on the cytoplasmic side.

It belongs to the nucleobase:cation symporter-2 (NCS2) (TC 2.A.40) family.

It localises to the cell inner membrane. It carries out the reaction uracil(in) + H(+)(in) = uracil(out) + H(+)(out). In terms of biological role, transport of uracil in the cell. The polypeptide is Uracil permease (uraA) (Escherichia coli O157:H7).